A 120-amino-acid polypeptide reads, in one-letter code: NAD(P)H-quinone oxidoreductase subunit 3, chloroplastic (120 aa).

3 helical membrane passes run 9-29 (IFWAFLIISIFIPILAFTISG), 64-84 (MFALVFVVFDVETVFLYPWAM), and 88-108 (VLGISVFIEALIFVLILIVGS).

It belongs to the complex I subunit 3 family. NDH is composed of at least 16 different subunits, 5 of which are encoded in the nucleus.

The protein resides in the plastid. Its subcellular location is the chloroplast thylakoid membrane. It carries out the reaction a plastoquinone + NADH + (n+1) H(+)(in) = a plastoquinol + NAD(+) + n H(+)(out). The catalysed reaction is a plastoquinone + NADPH + (n+1) H(+)(in) = a plastoquinol + NADP(+) + n H(+)(out). NDH shuttles electrons from NAD(P)H:plastoquinone, via FMN and iron-sulfur (Fe-S) centers, to quinones in the photosynthetic chain and possibly in a chloroplast respiratory chain. The immediate electron acceptor for the enzyme in this species is believed to be plastoquinone. Couples the redox reaction to proton translocation, and thus conserves the redox energy in a proton gradient. This chain is NAD(P)H-quinone oxidoreductase subunit 3, chloroplastic, found in Lotus japonicus (Lotus corniculatus var. japonicus).